The primary structure comprises 490 residues: Aspartyl/glutamyl-tRNA(Asn/Gln) amidotransferase subunit B (490 aa).

The protein belongs to the GatB/GatE family. GatB subfamily. Heterotrimer of A, B and C subunits.

It catalyses the reaction L-glutamyl-tRNA(Gln) + L-glutamine + ATP + H2O = L-glutaminyl-tRNA(Gln) + L-glutamate + ADP + phosphate + H(+). It carries out the reaction L-aspartyl-tRNA(Asn) + L-glutamine + ATP + H2O = L-asparaginyl-tRNA(Asn) + L-glutamate + ADP + phosphate + 2 H(+). Its function is as follows. Allows the formation of correctly charged Asn-tRNA(Asn) or Gln-tRNA(Gln) through the transamidation of misacylated Asp-tRNA(Asn) or Glu-tRNA(Gln) in organisms which lack either or both of asparaginyl-tRNA or glutaminyl-tRNA synthetases. The reaction takes place in the presence of glutamine and ATP through an activated phospho-Asp-tRNA(Asn) or phospho-Glu-tRNA(Gln). The sequence is that of Aspartyl/glutamyl-tRNA(Asn/Gln) amidotransferase subunit B from Methylorubrum extorquens (strain CM4 / NCIMB 13688) (Methylobacterium extorquens).